A 611-amino-acid polypeptide reads, in one-letter code: Histone acetyltransferase KAT7 (611 aa).

Residues 1-173 (MPRRKRNAGS…SDLSHRPKRR (173 aa)) are disordered. Phosphoserine is present on serine 10. The span at 42 to 57 (VTRSSARLSQSSQDSS) shows a compositional bias: low complexity. A phosphoserine; by ATR mark is found at serine 50 and serine 53. The residue at position 57 (serine 57) is a Phosphoserine; by PLK1. Serine 64 carries the post-translational modification Phosphoserine. Phosphothreonine; by CDK1 occurs at positions 85 and 88. The segment covering 96–105 (QTRSSGSETE) has biased composition (polar residues). A Phosphoserine modification is found at serine 102. At threonine 104 the chain carries Phosphothreonine. Over residues 110–125 (FSDRETKNTADHDESP) the composition is skewed to basic and acidic residues. A phosphoserine mark is found at serine 111 and serine 124. At threonine 128 the chain carries Phosphothreonine. The span at 134–145 (PSSESDIDISSP) shows a compositional bias: low complexity. The span at 148–168 (SHDESIAKDMSLKDSGSDLSH) shows a compositional bias: basic and acidic residues. A phosphoserine mark is found at serine 158, serine 162, serine 164, and serine 178. Residues 176 to 219 (HESYNFNMKCPTPGCNSLGHLTGKHERHFSISGCPLYHNLSADE) form a CCHHC-type zinc finger. Lysine 199 and lysine 277 each carry N6-acetyllysine. Lysine 323 is covalently cross-linked (Glycyl lysine isopeptide (Lys-Gly) (interchain with G-Cter in SUMO2)). Residues 332 to 607 (EGSNMIKTIA…MDPSCLKWTP (276 aa)) enclose the MYST-type HAT domain. Lysine 338 is covalently cross-linked (Glycyl lysine isopeptide (Lys-Gly) (interchain with G-Cter in ubiquitin)). The C2HC MYST-type zinc-finger motif lies at 365 to 390 (LYMCEFCLKYMKSQTILRRHMAKCVW). Residues cysteine 368, cysteine 371, histidine 384, and cysteine 388 each contribute to the Zn(2+) site. N6-acetyllysine; by autocatalysis is present on lysine 432. Residues 475-477 (ILT) and 483-488 (RQGYGK) each bind acetyl-CoA. Residue serine 506 is modified to Phosphoserine. Glutamate 508 (proton donor/acceptor) is an active-site residue. Serine 512 and serine 521 together coordinate acetyl-CoA.

This sequence belongs to the MYST (SAS/MOZ) family. Component of the HBO1 complex composed of KAT7/HBO1, MEAF6, ING4 or ING5, and one scaffold subunit: complexes containing BRPF scaffold (BRPF1, BRD1/BRPF2 or BRPF3) direct KAT7/HBO1 specificity towards H3K14ac, while complexes containing JADE scaffold (JADE1, JADE2 and JADE3) mediate acetylation of histone H4. Interacts with MCM2 and ORC1. Interacts with the androgen receptor (AR); in the presence of dihydrotestosterone. Interacts with CDT1. Interacts with MAP2K1 and CUL1. Interacts with p53/TP53; leading to inhibit histone acetyltransferase activity. Interacts with MIS18BP1. Phosphorylated at Ser-50 and Ser-53 by ATR in response to DNA damage, promoting its ubiquitination by the CRL4(DDB2) complex and subsequent degradation. Phosphorylation at Ser-50 and Ser-53 by ATR in response to ultraviolet-induced DNA, promotes localization to DNA damage sites. Phosphorylation at Ser-57 by PLK1 during mitosis seems important for prereplicative complex formation and DNA replication licensing, and requires prior phosphorylation at Thr-85 and Thr-88 by CDK1. Phosphorylated by MAP2K1, which accelerates its degradation. Post-translationally, ubiquitinated at Lys-338, leading to proteasomal degradation. Ubiquitinated by the CRL4(DDB2) complex following phosphorylation by ATR, leading to its subsequent degradation. In terms of processing, autoacetylation at Lys-432 is required for proper function. Ubiquitously expressed, with highest levels in testis.

The protein resides in the nucleus. It localises to the chromosome. It is found in the centromere. The protein localises to the cytoplasm. Its subcellular location is the cytosol. It catalyses the reaction L-lysyl-[histone] + acetyl-CoA = N(6)-acetyl-L-lysyl-[histone] + CoA + H(+). Histone acetyltransferase activity is inhibited by GMNN in the context of a complex with CDT1, inhibiting histone H4 acetylation and DNA replication licensing. Selectively inhibited by WM-3835 (N'-(4-fluoro-5-methyl-[1,1'-biphenyl]-3-carbonyl)-3- hydroxybenzenesulfonohydrazide) inhibitor. Functionally, catalytic subunit of histone acetyltransferase HBO1 complexes, which specifically mediate acetylation of histone H3 at 'Lys-14' (H3K14ac), thereby regulating various processes, such as gene transcription, protein ubiquitination, immune regulation, stem cell pluripotent and self-renewal maintenance and embryonic development. Some complexes also catalyze acetylation of histone H4 at 'Lys-5', 'Lys-8' and 'Lys-12' (H4K5ac, H4K8ac and H4K12ac, respectively), regulating DNA replication initiation, regulating DNA replication initiation. Specificity of the HBO1 complexes is determined by the scaffold subunit: complexes containing BRPF scaffold (BRPF1, BRD1/BRPF2 or BRPF3) direct KAT7/HBO1 specificity towards H3K14ac, while complexes containing JADE (JADE1, JADE2 and JADE3) scaffold direct KAT7/HBO1 specificity towards histone H4. H3K14ac promotes transcriptional elongation by facilitating the processivity of RNA polymerase II. Acts as a key regulator of hematopoiesis by forming a complex with BRD1/BRPF2, directing KAT7/HBO1 specificity towards H3K14ac and promoting erythroid differentiation. H3K14ac is also required for T-cell development. KAT7/HBO1-mediated acetylation facilitates two consecutive steps, licensing and activation, in DNA replication initiation: H3K14ac facilitates the activation of replication origins, and histone H4 acetylation (H4K5ac, H4K8ac and H4K12ac) facilitates chromatin loading of MCM complexes, promoting DNA replication licensing. Acts as a positive regulator of centromeric CENPA assembly: recruited to centromeres and mediates histone acetylation, thereby preventing centromere inactivation mediated by SUV39H1, possibly by increasing histone turnover/exchange. Involved in nucleotide excision repair: phosphorylation by ATR in response to ultraviolet irradiation promotes its localization to DNA damage sites, where it mediates histone acetylation to facilitate recruitment of XPC at the damaged DNA sites. Acts as an inhibitor of NF-kappa-B independently of its histone acetyltransferase activity. Its function is as follows. Plays a central role in the maintenance of leukemia stem cells in acute myeloid leukemia (AML). Acts by mediating acetylation of histone H3 at 'Lys-14' (H3K14ac), thereby facilitating the processivity of RNA polymerase II to maintain the high expression of key genes, such as HOXA9 and HOXA10 that help to sustain the functional properties of leukemia stem cells. In Homo sapiens (Human), this protein is Histone acetyltransferase KAT7.